A 296-amino-acid polypeptide reads, in one-letter code: GTPase Era (296 aa).

The Era-type G domain maps to 7 to 174 (RAGFVAIVGR…LDEIAAGLPQ (168 aa)). A G1 region spans residues 15–22 (GRPNVGKS). 15–22 (GRPNVGKS) serves as a coordination point for GTP. Positions 41-45 (QTTRH) are G2. Positions 62–65 (DTPG) are G3. Residues 62 to 66 (DTPGF) and 123 to 126 (SKID) contribute to the GTP site. Residues 123 to 126 (SKID) are G4. The interval 153 to 155 (VSA) is G5. The KH type-2 domain occupies 205 to 281 (VGDELPYGCT…HLEIYIKVRK (77 aa)).

Belongs to the TRAFAC class TrmE-Era-EngA-EngB-Septin-like GTPase superfamily. Era GTPase family. In terms of assembly, monomer.

The protein resides in the cytoplasm. It localises to the cell inner membrane. Its function is as follows. An essential GTPase that binds both GDP and GTP, with rapid nucleotide exchange. Plays a role in 16S rRNA processing and 30S ribosomal subunit biogenesis and possibly also in cell cycle regulation and energy metabolism. The chain is GTPase Era from Bordetella parapertussis (strain 12822 / ATCC BAA-587 / NCTC 13253).